Reading from the N-terminus, the 89-residue chain is Small ribosomal subunit protein uS19 (89 aa).

It belongs to the universal ribosomal protein uS19 family.

Its function is as follows. Protein S19 forms a complex with S13 that binds strongly to the 16S ribosomal RNA. The chain is Small ribosomal subunit protein uS19 from Xylella fastidiosa (strain M23).